Here is a 194-residue protein sequence, read N- to C-terminus: E3 ubiquitin-protein ligase RNF4 (194 aa).

Over residues 1-12 (MSTRNPQRKRRG) the composition is skewed to basic residues. The tract at residues 1–20 (MSTRNPQRKRRGGTVNSRQT) is required for ubiquitination activity. The tract at residues 1–39 (MSTRNPQRKRRGGTVNSRQTQKRTRETTSTPEVSLETEP) is disordered. The segment at 6–65 (PQRKRRGGTVNSRQTQKRTRETTSTPEVSLETEPIELVETVGDEIVDLTCESLEPVVVDL) is mediates interaction with TRPS1. Positions 40–43 (IELV) match the SUMO interaction motif 1; mediates the binding to polysumoylated substrates motif. Positions 50-53 (IVDL) match the SUMO interaction motif 2; mediates the binding to polysumoylated substrates motif. The SUMO interaction motif 3; mediates the binding to polysumoylated substrates signature appears at 61–63 (VVV). Positions 71–74 (VVIV) match the SUMO interaction motif 4; mediates the binding to polysumoylated substrates motif. 2 positions are modified to phosphoserine: Ser-98 and Ser-99. A disordered region spans residues 110-130 (VYVTTHTPRSTKDDGATGPRP). The Zn(2+) site is built by Cys-136, Cys-139, Cys-158, His-160, Cys-163, Cys-166, Cys-177, and Cys-180. An RING-type zinc finger spans residues 136-181 (CPICMDGYSEIVQNGRLIVSTECGHVFCSQCLRDSLKNANTCPTCR).

In terms of assembly, homodimer (via RING-type zinc finger domain). Interacts with GSC2. Interacts with AR/the androgen receptor and TBP. Interacts with TCF20. Interacts with PATZ1. Interacts with TRPS1; negatively regulates TRPS1 transcriptional repressor activity. Interacts with PML (isoform PML-1, isoform PML-2, isoform PML-3, isoform PML-4, isoform PML-5 and isoform PML-6). Interacts with PRDM1/Blimp-1. Post-translationally, sumoylated; conjugated by one or two SUMO1 moieties. In terms of processing, autoubiquitinated. In terms of tissue distribution, in the embryo, expressed primarily in the developing nervous system with strong expression in the dorsal root ganglia and gonads. Ubiquitously expressed in the adult.

It localises to the cytoplasm. Its subcellular location is the nucleus. The protein resides in the PML body. The enzyme catalyses S-ubiquitinyl-[E2 ubiquitin-conjugating enzyme]-L-cysteine + [acceptor protein]-L-lysine = [E2 ubiquitin-conjugating enzyme]-L-cysteine + N(6)-ubiquitinyl-[acceptor protein]-L-lysine.. Its pathway is protein modification; protein ubiquitination. Its function is as follows. E3 ubiquitin-protein ligase which binds polysumoylated chains covalently attached to proteins and mediates 'Lys-6'-, 'Lys-11'-, 'Lys-48'- and 'Lys-63'-linked polyubiquitination of those substrates and their subsequent targeting to the proteasome for degradation. Regulates the degradation of several proteins including PML and the transcriptional activator PEA3. Involved in chromosome alignment and spindle assembly, it regulates the kinetochore CENPH-CENPI-CENPK complex by targeting polysumoylated CENPI to proteasomal degradation. Regulates the cellular responses to hypoxia and heat shock through degradation of respectively EPAS1 and PARP1. Alternatively, it may also bind DNA/nucleosomes and have a more direct role in the regulation of transcription for instance enhancing basal transcription and steroid receptor-mediated transcriptional activation. Catalyzes ubiquitination of sumoylated PARP1 in response to PARP1 trapping to chromatin, leading to PARP1 removal from chromatin by VCP/p97. The polypeptide is E3 ubiquitin-protein ligase RNF4 (Mus musculus (Mouse)).